The following is a 250-amino-acid chain: FAS1 domain-containing protein AER383W (250 aa).

The N-terminal stretch at 1–18 (MRLKTILLGFCAFHVARS) is a signal peptide. The 161-residue stretch at 87–247 (GVTLDDRLQS…GIVLVIDSSL (161 aa)) folds into the FAS1 domain.

The protein localises to the vacuole. The protein is FAS1 domain-containing protein AER383W of Eremothecium gossypii (strain ATCC 10895 / CBS 109.51 / FGSC 9923 / NRRL Y-1056) (Yeast).